The following is a 660-amino-acid chain: DNA mismatch repair protein MutL (660 aa).

The protein belongs to the DNA mismatch repair MutL/HexB family.

Functionally, this protein is involved in the repair of mismatches in DNA. It is required for dam-dependent methyl-directed DNA mismatch repair. May act as a 'molecular matchmaker', a protein that promotes the formation of a stable complex between two or more DNA-binding proteins in an ATP-dependent manner without itself being part of a final effector complex. This chain is DNA mismatch repair protein MutL, found in Streptococcus equi subsp. zooepidemicus (strain MGCS10565).